The following is a 320-amino-acid chain: Beta-ketoacyl-[acyl-carrier-protein] synthase III (320 aa).

Catalysis depends on residues Cys-114 and His-247. The ACP-binding stretch occupies residues 248-252 (QANRR). Asn-277 is an active-site residue.

This sequence belongs to the thiolase-like superfamily. FabH family. As to quaternary structure, homodimer.

The protein localises to the cytoplasm. It catalyses the reaction malonyl-[ACP] + acetyl-CoA + H(+) = 3-oxobutanoyl-[ACP] + CO2 + CoA. The protein operates within lipid metabolism; fatty acid biosynthesis. Its function is as follows. Catalyzes the condensation reaction of fatty acid synthesis by the addition to an acyl acceptor of two carbons from malonyl-ACP. Catalyzes the first condensation reaction which initiates fatty acid synthesis and may therefore play a role in governing the total rate of fatty acid production. Possesses both acetoacetyl-ACP synthase and acetyl transacylase activities. Its substrate specificity determines the biosynthesis of branched-chain and/or straight-chain of fatty acids. The protein is Beta-ketoacyl-[acyl-carrier-protein] synthase III of Neisseria meningitidis serogroup C (strain 053442).